Reading from the N-terminus, the 212-residue chain is Probable GTP-binding protein EngB (212 aa).

In terms of domain architecture, EngB-type G spans 38–210 (SLPEIAFVGK…KASLAKCIKP (173 aa)). GTP contacts are provided by residues 46-53 (GKSNVGKS), 73-77 (GRTRQ), 91-94 (DLPG), 158-161 (TKSD), and 189-191 (VSS). The Mg(2+) site is built by serine 53 and threonine 75.

Belongs to the TRAFAC class TrmE-Era-EngA-EngB-Septin-like GTPase superfamily. EngB GTPase family. Mg(2+) serves as cofactor.

Its function is as follows. Necessary for normal cell division and for the maintenance of normal septation. This Rickettsia felis (strain ATCC VR-1525 / URRWXCal2) (Rickettsia azadi) protein is Probable GTP-binding protein EngB.